The sequence spans 207 residues: LexA repressor (207 aa).

The segment at residues 28–48 (VREIGEAVGLASSSTVHGHLS) is a DNA-binding region (H-T-H motif). Residues serine 130 and lysine 168 each act as for autocatalytic cleavage activity in the active site.

Belongs to the peptidase S24 family. In terms of assembly, homodimer.

It carries out the reaction Hydrolysis of Ala-|-Gly bond in repressor LexA.. Represses a number of genes involved in the response to DNA damage (SOS response), including recA and lexA. In the presence of single-stranded DNA, RecA interacts with LexA causing an autocatalytic cleavage which disrupts the DNA-binding part of LexA, leading to derepression of the SOS regulon and eventually DNA repair. The sequence is that of LexA repressor from Staphylococcus haemolyticus (strain JCSC1435).